We begin with the raw amino-acid sequence, 471 residues long: Ribulose bisphosphate carboxylase large chain (471 aa).

Substrate-binding residues include N115 and T165. K167 functions as the Proton acceptor in the catalytic mechanism. A substrate-binding site is contributed by K169. Mg(2+)-binding residues include K193, D195, and E196. At K193 the chain carries N6-carboxylysine. The Proton acceptor role is filled by H286. Substrate contacts are provided by R287, H319, and S371.

This sequence belongs to the RuBisCO large chain family. Type I subfamily. Heterohexadecamer of 8 large chains and 8 small chains. Requires Mg(2+) as cofactor.

The protein localises to the carboxysome. It carries out the reaction 2 (2R)-3-phosphoglycerate + 2 H(+) = D-ribulose 1,5-bisphosphate + CO2 + H2O. It catalyses the reaction D-ribulose 1,5-bisphosphate + O2 = 2-phosphoglycolate + (2R)-3-phosphoglycerate + 2 H(+). Its function is as follows. RuBisCO catalyzes two reactions: the carboxylation of D-ribulose 1,5-bisphosphate, the primary event in carbon dioxide fixation, as well as the oxidative fragmentation of the pentose substrate in the photorespiration process. Both reactions occur simultaneously and in competition at the same active site. The protein is Ribulose bisphosphate carboxylase large chain of Synechococcus sp. (strain RCC307).